The primary structure comprises 170 residues: Fimbrial protein (170 aa).

A propeptide spanning residues 1–7 (MNTLQKG) is cleaved from the precursor. At Phe-8 the chain carries N-methylphenylalanine. Residues 8–28 (FTLIELMIVIAIVGILAAVAL) traverse the membrane as a helical segment. Ser-70 carries an O-linked (Gal...) serine glycan. Ser-100 is modified (O-(sn-1-glycerophosphoryl)serine). Cys-127 and Cys-163 are joined by a disulfide.

It belongs to the N-Me-Phe pilin family. As to quaternary structure, the pili are polar flexible filaments of about 5.4 nanometers diameter and 2.5 micrometers average length; they consist of only a single polypeptide chain arranged in a helical configuration of five subunits per turn in the assembled pilus. In terms of processing, O-linked glycan consists of GlcNAc-Gal disaccharide.

The protein resides in the fimbrium. It is found in the membrane. Its function is as follows. Major component of the type IV pilus (T4P) that plays a role in cellular adherence, microcolony formation as well as twitching motility. The protein is Fimbrial protein (pilE) of Neisseria meningitidis serogroup A / serotype 4A (strain DSM 15465 / Z2491).